Consider the following 251-residue polypeptide: Pyrroloquinoline-quinone synthase (251 aa).

Belongs to the PqqC family.

It carries out the reaction 6-(2-amino-2-carboxyethyl)-7,8-dioxo-1,2,3,4,7,8-hexahydroquinoline-2,4-dicarboxylate + 3 O2 = pyrroloquinoline quinone + 2 H2O2 + 2 H2O + H(+). It participates in cofactor biosynthesis; pyrroloquinoline quinone biosynthesis. Functionally, ring cyclization and eight-electron oxidation of 3a-(2-amino-2-carboxyethyl)-4,5-dioxo-4,5,6,7,8,9-hexahydroquinoline-7,9-dicarboxylic-acid to PQQ. The chain is Pyrroloquinoline-quinone synthase from Pseudomonas syringae pv. syringae (strain B728a).